The primary structure comprises 239 residues: Ribosomal RNA small subunit methyltransferase G (239 aa).

S-adenosyl-L-methionine is bound by residues Gly-78, Phe-83, 129-130 (AE), and Arg-148.

It belongs to the methyltransferase superfamily. RNA methyltransferase RsmG family.

Its subcellular location is the cytoplasm. Specifically methylates the N7 position of a guanine in 16S rRNA. The polypeptide is Ribosomal RNA small subunit methyltransferase G (Clostridium botulinum (strain Kyoto / Type A2)).